Here is a 90-residue protein sequence, read N- to C-terminus: U7-theraphotoxin-Hhn1c (90 aa).

The first 19 residues, 1-19 (MKTAIFTVVLALAVFAVLS), serve as a signal peptide directing secretion. The propeptide occupies 20-50 (FGWEANEKALSEEFTELIHEKEAASETEARE). 3 disulfides stabilise this stretch: cysteine 51-cysteine 65, cysteine 58-cysteine 70, and cysteine 64-cysteine 81.

This sequence belongs to the neurotoxin 10 (Hwtx-1) family. 13 (Hntx-13) subfamily. As to expression, expressed by the venom gland.

It is found in the secreted. Ion channel inhibitor. The polypeptide is U7-theraphotoxin-Hhn1c (Cyriopagopus hainanus (Chinese bird spider)).